The primary structure comprises 122 residues: Large ribosomal subunit protein uL14 (122 aa).

It belongs to the universal ribosomal protein uL14 family. Part of the 50S ribosomal subunit. Forms a cluster with proteins L3 and L19. In the 70S ribosome, L14 and L19 interact and together make contacts with the 16S rRNA in bridges B5 and B8.

In terms of biological role, binds to 23S rRNA. Forms part of two intersubunit bridges in the 70S ribosome. This is Large ribosomal subunit protein uL14 from Cytophaga hutchinsonii (strain ATCC 33406 / DSM 1761 / CIP 103989 / NBRC 15051 / NCIMB 9469 / D465).